The sequence spans 226 residues: Cold-regulated 413 inner membrane protein 2, chloroplastic (226 aa).

The transit peptide at 1 to 76 (MASLCLSSSR…RKRGSSVVCY (76 aa)) directs the protein to the chloroplast. At 77-79 (ATP) the chain is on the stromal side. The chain crosses the membrane as a helical span at residues 80–100 (MLSVHNLQWISTISCVALMFA). Topologically, residues 101 to 103 (RGT) are chloroplast intermembrane. Residues 104–124 (GIHKSFVVPLFALQAPMGIVS) traverse the membrane as a helical segment. At 125-129 (WMKGE) the chain is on the stromal side. The helical transmembrane segment at 130–150 (YGIWAAFLALLTRLFFSFPVE) threads the bilayer. The Chloroplast intermembrane segment spans residues 151–152 (LE). The helical transmembrane segment at 153–173 (LPFIALLLVIVAPYQVMSIRG) threads the bilayer. Residues 174–176 (KQE) are Stromal-facing. Residues 177–197 (GAILSLAISCFLAFQHFSRAG) form a helical membrane-spanning segment. Topologically, residues 198-205 (TLQKAFDQ) are chloroplast intermembrane. Residues 206–226 (NSVLATVAIIGVTVVSFLFLI) traverse the membrane as a helical segment.

This sequence belongs to the Cold-regulated 413 protein family.

It localises to the plastid. It is found in the chloroplast inner membrane. The sequence is that of Cold-regulated 413 inner membrane protein 2, chloroplastic (COR413IM2) from Arabidopsis thaliana (Mouse-ear cress).